A 297-amino-acid chain; its full sequence is Methionyl-tRNA formyltransferase (297 aa).

The interval 31-52 is disordered; sequence QPPRAAGRGQKPRPSPVHRAAE. Residue 108 to 111 coordinates (6S)-5,6,7,8-tetrahydrofolate; sequence SLLP.

The protein belongs to the Fmt family.

It carries out the reaction L-methionyl-tRNA(fMet) + (6R)-10-formyltetrahydrofolate = N-formyl-L-methionyl-tRNA(fMet) + (6S)-5,6,7,8-tetrahydrofolate + H(+). Its function is as follows. Attaches a formyl group to the free amino group of methionyl-tRNA(fMet). The formyl group appears to play a dual role in the initiator identity of N-formylmethionyl-tRNA by promoting its recognition by IF2 and preventing the misappropriation of this tRNA by the elongation apparatus. The chain is Methionyl-tRNA formyltransferase from Paracoccus denitrificans (strain Pd 1222).